A 343-amino-acid chain; its full sequence is Holliday junction branch migration complex subunit RuvB (343 aa).

The interval M1–Y181 is large ATPase domain (RuvB-L). ATP is bound by residues L20, R21, G62, K65, T66, T67, E128–F130, R171, Y181, and R218. T66 is a Mg(2+) binding site. Residues T182–G252 are small ATPAse domain (RuvB-S). A head domain (RuvB-H) region spans residues D255–E343. DNA-binding residues include R308 and R313.

Belongs to the RuvB family. As to quaternary structure, homohexamer. Forms an RuvA(8)-RuvB(12)-Holliday junction (HJ) complex. HJ DNA is sandwiched between 2 RuvA tetramers; dsDNA enters through RuvA and exits via RuvB. An RuvB hexamer assembles on each DNA strand where it exits the tetramer. Each RuvB hexamer is contacted by two RuvA subunits (via domain III) on 2 adjacent RuvB subunits; this complex drives branch migration. In the full resolvosome a probable DNA-RuvA(4)-RuvB(12)-RuvC(2) complex forms which resolves the HJ.

It is found in the cytoplasm. The enzyme catalyses ATP + H2O = ADP + phosphate + H(+). Functionally, the RuvA-RuvB-RuvC complex processes Holliday junction (HJ) DNA during genetic recombination and DNA repair, while the RuvA-RuvB complex plays an important role in the rescue of blocked DNA replication forks via replication fork reversal (RFR). RuvA specifically binds to HJ cruciform DNA, conferring on it an open structure. The RuvB hexamer acts as an ATP-dependent pump, pulling dsDNA into and through the RuvAB complex. RuvB forms 2 homohexamers on either side of HJ DNA bound by 1 or 2 RuvA tetramers; 4 subunits per hexamer contact DNA at a time. Coordinated motions by a converter formed by DNA-disengaged RuvB subunits stimulates ATP hydrolysis and nucleotide exchange. Immobilization of the converter enables RuvB to convert the ATP-contained energy into a lever motion, pulling 2 nucleotides of DNA out of the RuvA tetramer per ATP hydrolyzed, thus driving DNA branch migration. The RuvB motors rotate together with the DNA substrate, which together with the progressing nucleotide cycle form the mechanistic basis for DNA recombination by continuous HJ branch migration. Branch migration allows RuvC to scan DNA until it finds its consensus sequence, where it cleaves and resolves cruciform DNA. In Campylobacter fetus subsp. fetus (strain 82-40), this protein is Holliday junction branch migration complex subunit RuvB.